The primary structure comprises 85 residues: Putative membrane protein insertion efficiency factor (85 aa).

The protein belongs to the UPF0161 family.

The protein resides in the cell inner membrane. Functionally, could be involved in insertion of integral membrane proteins into the membrane. In Tolumonas auensis (strain DSM 9187 / NBRC 110442 / TA 4), this protein is Putative membrane protein insertion efficiency factor.